The chain runs to 791 residues: Genome polyprotein (791 aa).

The segment at 1–15 (MNNQRKKTGRPSFNM) is interaction with host EXOC1. At 1-101 (MNNQRKKTGR…LNIMNRRKRS (101 aa)) the chain is on the cytoplasmic side. Residues 37–72 (LLSGQGPMKLVMAFIAFLRFLAIPPTAGILARWSSF) form a hydrophobic; homodimerization of capsid protein C region. Positions 101–114 (SVTMLLMLLPTALA) are cleaved as a propeptide — ER anchor for the capsid protein C, removed in mature form by serine protease NS3. The chain crosses the membrane as a helical span at residues 102–119 (VTMLLMLLPTALAFHLTT). Over 120 to 242 (RGGEPTLIVS…QIQKVETWAL (123 aa)) the chain is Extracellular. Asparagine 183 carries N-linked (GlcNAc...) asparagine; by host glycosylation. A helical transmembrane segment spans residues 243-260 (RHPGFTVIGLFLAHAIGT). Serine 261 is a topological domain (cytoplasmic). The helical transmembrane segment at 262–280 (ITQKGIIFILLMLVTPSMA) threads the bilayer. Topologically, residues 281–725 (MRCVGIGNRD…IHQIFGTAYG (445 aa)) are extracellular. Intrachain disulfides connect cysteine 283-cysteine 310, cysteine 340-cysteine 401, cysteine 354-cysteine 385, and cysteine 372-cysteine 396. Asparagine 347 is a glycosylation site (N-linked (GlcNAc...) asparagine; by host). The segment at 378-391 (DRGWGNGCGLFGKG) is fusion peptide. N-linked (GlcNAc...) asparagine; by host glycosylation occurs at asparagine 433. 2 disulfide bridges follow: cysteine 465/cysteine 565 and cysteine 582/cysteine 613. Residues 726-746 (ILFSGVSWTMKIGIGILLTWL) traverse the membrane as a helical segment. At 747 to 752 (GLNSRS) the chain is on the cytoplasmic side. A helical membrane pass occupies residues 753–775 (TSLSMTCIAVGMVTLYLGVMVQA). At 776–791 (DSGCVINWKGKELKCG) the chain is on the extracellular side. Cysteine 779 and cysteine 790 are oxidised to a cystine.

As to quaternary structure, homodimer. Interacts (via N-terminus) with host EXOC1 (via C-terminus); this interaction results in EXOC1 degradation through the proteasome degradation pathway. Forms heterodimers with envelope protein E in the endoplasmic reticulum and Golgi. In terms of assembly, homodimer; in the endoplasmic reticulum and Golgi. Interacts with protein prM. Interacts with non-structural protein 1. As to quaternary structure, homodimer; Homohexamer when secreted. Interacts with envelope protein E. Post-translationally, specific enzymatic cleavages in vivo yield mature proteins. Cleavages in the lumen of endoplasmic reticulum are performed by host signal peptidase, wereas cleavages in the cytoplasmic side are performed by serine protease NS3. Signal cleavage at the 2K-4B site requires a prior NS3 protease-mediated cleavage at the 4A-2K site. N-glycosylated. In terms of processing, N-glycosylated. The excreted form is glycosylated and this is required for efficient secretion of the protein from infected cells.

It localises to the virion. It is found in the host nucleus. Its subcellular location is the host cytoplasm. The protein resides in the host perinuclear region. The protein localises to the secreted. It localises to the virion membrane. It is found in the host endoplasmic reticulum membrane. Plays a role in virus budding by binding to the cell membrane and gathering the viral RNA into a nucleocapsid that forms the core of a mature virus particle. During virus entry, may induce genome penetration into the host cytoplasm after hemifusion induced by the surface proteins. Can migrate to the cell nucleus where it modulates host functions. Overcomes the anti-viral effects of host EXOC1 by sequestering and degrading the latter through the proteasome degradation pathway. In terms of biological role, inhibits RNA silencing by interfering with host Dicer. Functionally, prevents premature fusion activity of envelope proteins in trans-Golgi by binding to envelope protein E at pH6.0. After virion release in extracellular space, gets dissociated from E dimers. Its function is as follows. Acts as a chaperone for envelope protein E during intracellular virion assembly by masking and inactivating envelope protein E fusion peptide. prM is the only viral peptide matured by host furin in the trans-Golgi network probably to avoid catastrophic activation of the viral fusion activity in acidic GolGi compartment prior to virion release. prM-E cleavage is inefficient, and many virions are only partially matured. These uncleaved prM would play a role in immune evasion. May play a role in virus budding. Exerts cytotoxic effects by activating a mitochondrial apoptotic pathway through M ectodomain. May display a viroporin activity. In terms of biological role, binds to host cell surface receptor and mediates fusion between viral and cellular membranes. Envelope protein is synthesized in the endoplasmic reticulum in the form of heterodimer with protein prM. They play a role in virion budding in the ER, and the newly formed immature particle is covered with 60 spikes composed of heterodimer between precursor prM and envelope protein E. The virion is transported to the Golgi apparatus where the low pH causes dissociation of PrM-E heterodimers and formation of E homodimers. prM-E cleavage is inefficient, and many virions are only partially matured. These uncleaved prM would play a role in immune evasion. Functionally, involved in immune evasion, pathogenesis and viral replication. Once cleaved off the polyprotein, is targeted to three destinations: the viral replication cycle, the plasma membrane and the extracellular compartment. Essential for viral replication. Required for formation of the replication complex and recruitment of other non-structural proteins to the ER-derived membrane structures. Excreted as a hexameric lipoparticle that plays a role against host immune response. Antagonizing the complement function. Binds to the host macrophages and dendritic cells. Inhibits signal transduction originating from Toll-like receptor 3 (TLR3). Its function is as follows. Disrupts the host endothelial glycocalyx layer of host pulmonary microvascular endothelial cells, inducing degradation of sialic acid and shedding of heparan sulfate proteoglycans. NS1 induces expression of sialidases, heparanase, and activates cathepsin L, which activates heparanase via enzymatic cleavage. These effects are probably linked to the endothelial hyperpermeability observed in severe dengue disease. This is Genome polyprotein from Dengue virus type 1 (strain Jamaica/CV1636/1977) (DENV-1).